Consider the following 228-residue polypeptide: L-ribulose-5-phosphate 4-epimerase UlaF (228 aa).

Residues 26 to 27 (GN), 43 to 44 (SG), and 72 to 73 (SS) each bind substrate. Positions 74, 93, and 95 each coordinate Zn(2+). Residue Asp-118 is the Proton donor/acceptor of the active site. His-167 is a binding site for Zn(2+). Tyr-225 acts as the Proton donor/acceptor in catalysis.

This sequence belongs to the aldolase class II family. AraD/FucA subfamily. The cofactor is Zn(2+).

It catalyses the reaction L-ribulose 5-phosphate = D-xylulose 5-phosphate. It functions in the pathway cofactor degradation; L-ascorbate degradation; D-xylulose 5-phosphate from L-ascorbate: step 4/4. Catalyzes the isomerization of L-ribulose 5-phosphate to D-xylulose 5-phosphate. Is involved in the anaerobic L-ascorbate utilization. The polypeptide is L-ribulose-5-phosphate 4-epimerase UlaF (Escherichia coli (strain 55989 / EAEC)).